A 115-amino-acid polypeptide reads, in one-letter code: UPF0738 protein SERP0585 (115 aa).

Belongs to the UPF0738 family.

This Staphylococcus epidermidis (strain ATCC 35984 / DSM 28319 / BCRC 17069 / CCUG 31568 / BM 3577 / RP62A) protein is UPF0738 protein SERP0585.